The following is a 279-amino-acid chain: Bifunctional protein FolD 1 (279 aa).

NADP(+)-binding positions include 166 to 168 (GRS) and Ser191.

It belongs to the tetrahydrofolate dehydrogenase/cyclohydrolase family. In terms of assembly, homodimer.

The enzyme catalyses (6R)-5,10-methylene-5,6,7,8-tetrahydrofolate + NADP(+) = (6R)-5,10-methenyltetrahydrofolate + NADPH. It carries out the reaction (6R)-5,10-methenyltetrahydrofolate + H2O = (6R)-10-formyltetrahydrofolate + H(+). Its pathway is one-carbon metabolism; tetrahydrofolate interconversion. Catalyzes the oxidation of 5,10-methylenetetrahydrofolate to 5,10-methenyltetrahydrofolate and then the hydrolysis of 5,10-methenyltetrahydrofolate to 10-formyltetrahydrofolate. The sequence is that of Bifunctional protein FolD 1 from Salinispora arenicola (strain CNS-205).